Reading from the N-terminus, the 556-residue chain is M-phase inducer phosphatase (556 aa).

Disordered stretches follow at residues 165–186 (STDGLVPDSPTVLPKDGKQERR) and 257–297 (TSGL…RPRK). Residues 287-297 (KSAHPNMRPRK) show a composition bias toward basic residues. The Rhodanese domain maps to 371-474 (MFDNIMIIDC…FFAEHRSLCY (104 aa)). Cys421 is a catalytic residue. The segment covering 505-516 (RAQTFAFGQQSP) has biased composition (polar residues). The disordered stretch occupies residues 505 to 556 (RAQTFAFGQQSPEMEDSPTGRCRNNPGDRKLLASPFNDSPGSRFPGRRMLSY).

This sequence belongs to the MPI phosphatase family.

The catalysed reaction is O-phospho-L-tyrosyl-[protein] + H2O = L-tyrosyl-[protein] + phosphate. Functionally, this protein functions as a dosage-dependent inducer in mitotic control. It is a tyrosine protein phosphatase required for progression of the cell cycle. It may directly dephosphorylate p34(cdc2) and activate the p34(cdc2) kinase activity. This chain is M-phase inducer phosphatase (nimT), found in Emericella nidulans (strain FGSC A4 / ATCC 38163 / CBS 112.46 / NRRL 194 / M139) (Aspergillus nidulans).